A 473-amino-acid polypeptide reads, in one-letter code: Ribosomal RNA small subunit methyltransferase F (473 aa).

S-adenosyl-L-methionine contacts are provided by residues 124–130 (ASAPGSK), glutamate 148, aspartate 175, and aspartate 193. Cysteine 246 serves as the catalytic Nucleophile.

This sequence belongs to the class I-like SAM-binding methyltransferase superfamily. RsmB/NOP family.

It is found in the cytoplasm. It catalyses the reaction cytidine(1407) in 16S rRNA + S-adenosyl-L-methionine = 5-methylcytidine(1407) in 16S rRNA + S-adenosyl-L-homocysteine + H(+). Functionally, specifically methylates the cytosine at position 1407 (m5C1407) of 16S rRNA. In Aliivibrio fischeri (strain ATCC 700601 / ES114) (Vibrio fischeri), this protein is Ribosomal RNA small subunit methyltransferase F.